The primary structure comprises 1423 residues: Guanine nucleotide exchange factor subunit RIC1 (1423 aa).

2 WD repeats span residues 64-103 (TQFGSYKQAEWRPDSTMIAVSTANGYILFFHITSTRGDKY) and 304-343 (NKTGAVKLMRWSPDNSVVIVTWEYGGLSLWSVFGAQLICT). Positions 437 to 448 (ASQTQNPRSSST) are enriched in polar residues. The interval 437–463 (ASQTQNPRSSSTHSEHKPSREKSPFAD) is disordered. Residues 449-460 (HSEHKPSREKSP) are compositionally biased toward basic and acidic residues. Phosphothreonine is present on residues Thr992 and Thr996. Phosphoserine occurs at positions 1015, 1017, 1019, 1037, and 1172. Residues 1355-1423 (PDAFQPITMG…QDGTYDCSVS (69 aa)) form a disordered region. Polar residues predominate over residues 1379 to 1397 (GSSSHGSIPQGEVGSSNMV). Over residues 1404 to 1413 (TAQAEEEEPF) the composition is skewed to acidic residues.

This sequence belongs to the RIC1 family. Forms a complex with RGP1; the interaction enhances RAB6A GTPase activity. Interacts (via central domain) with RGP1. Interacts with RAB6A; the interaction is direct with a preference for RAB6A-GDP. Interacts (via C-terminus domain) with RAB33B; the interaction is direct with a preference for RAB33B-GTP. Interacts with GJA1. In terms of tissue distribution, present in kidney and various cell lines (at protein level). Widely expressed at low level.

Its subcellular location is the cytoplasm. It is found in the cytosol. The protein localises to the membrane. Functionally, the RIC1-RGP1 complex acts as a guanine nucleotide exchange factor (GEF), which activates RAB6A by exchanging bound GDP for free GTP, and may thereby be required for efficient fusion of endosome-derived vesicles with the Golgi compartment. The RIC1-RGP1 complex participates in the recycling of mannose-6-phosphate receptors. Required for phosphorylation and localization of GJA1. Is a regulator of procollagen transport and secretion, and is required for correct cartilage morphogenesis and development of the craniofacial skeleton. This is Guanine nucleotide exchange factor subunit RIC1 from Homo sapiens (Human).